Consider the following 115-residue polypeptide: Large ribosomal subunit protein uL22 (115 aa).

It belongs to the universal ribosomal protein uL22 family. As to quaternary structure, part of the 50S ribosomal subunit.

Functionally, this protein binds specifically to 23S rRNA; its binding is stimulated by other ribosomal proteins, e.g. L4, L17, and L20. It is important during the early stages of 50S assembly. It makes multiple contacts with different domains of the 23S rRNA in the assembled 50S subunit and ribosome. The globular domain of the protein is located near the polypeptide exit tunnel on the outside of the subunit, while an extended beta-hairpin is found that lines the wall of the exit tunnel in the center of the 70S ribosome. This Lactiplantibacillus plantarum (strain ATCC BAA-793 / NCIMB 8826 / WCFS1) (Lactobacillus plantarum) protein is Large ribosomal subunit protein uL22.